Consider the following 285-residue polypeptide: 2-dehydro-3-deoxyphosphooctonate aldolase (285 aa).

It belongs to the KdsA family.

The protein localises to the cytoplasm. It carries out the reaction D-arabinose 5-phosphate + phosphoenolpyruvate + H2O = 3-deoxy-alpha-D-manno-2-octulosonate-8-phosphate + phosphate. Its pathway is carbohydrate biosynthesis; 3-deoxy-D-manno-octulosonate biosynthesis; 3-deoxy-D-manno-octulosonate from D-ribulose 5-phosphate: step 2/3. The protein operates within bacterial outer membrane biogenesis; lipopolysaccharide biosynthesis. The protein is 2-dehydro-3-deoxyphosphooctonate aldolase of Variovorax paradoxus (strain S110).